We begin with the raw amino-acid sequence, 386 residues long: Phosphatidyl-myo-inositol mannosyltransferase (386 aa).

Residues Tyr9 and Gly16 each coordinate GDP-alpha-D-mannose. Residues Gln18, 62–63 (YN), and Arg68 contribute to the a 1,2-diacyl-sn-glycero-3-phospho-(1D-myo-inositol) site. GDP-alpha-D-mannose-binding positions include Arg196, 201 to 202 (RK), 251 to 253 (VDD), Lys256, 274 to 278 (ESFGI), and Glu282.

It belongs to the glycosyltransferase group 1 family. Glycosyltransferase 4 subfamily. In terms of assembly, monomer. Requires Mg(2+) as cofactor.

It is found in the cell membrane. It carries out the reaction a 1,2-diacyl-sn-glycero-3-phospho-(1D-myo-inositol) + GDP-alpha-D-mannose = a 1,2-diacyl-sn-glycero-3-phospho-[alpha-D-mannopyranosyl-(1&lt;-&gt;6)-D-myo-inositol] + GDP + H(+). Its pathway is phospholipid metabolism; phosphatidylinositol metabolism. Its function is as follows. Involved in the biosynthesis of phosphatidyl-myo-inositol mannosides (PIM) which are early precursors in the biosynthesis of lipomannans (LM) and lipoarabinomannans (LAM). Catalyzes the addition of a mannosyl residue from GDP-D-mannose (GDP-Man) to the position 2 of the carrier lipid phosphatidyl-myo-inositol (PI) to generate a phosphatidyl-myo-inositol bearing an alpha-1,2-linked mannose residue (PIM1). In contrary to PimB, the mannosyltransferase PimA is unable to transfer a mannose residue to the position 6 of the phosphatidyl-myo-inositol of PIM1. In Mycolicibacterium smegmatis (strain ATCC 700084 / mc(2)155) (Mycobacterium smegmatis), this protein is Phosphatidyl-myo-inositol mannosyltransferase.